Here is a 433-residue protein sequence, read N- to C-terminus: Adenylosuccinate synthetase (433 aa).

GTP is bound by residues Gly-11 to Lys-17 and Gly-39 to Thr-41. Catalysis depends on Asp-12, which acts as the Proton acceptor. The Mg(2+) site is built by Asp-12 and Gly-39. Residues Asp-12–Lys-15, Asn-37–His-40, Thr-134, Arg-148, Asn-230, Thr-245, and Arg-309 each bind IMP. The Proton donor role is filled by His-40. Val-305 to Arg-311 provides a ligand contact to substrate. Residues Arg-311, Lys-337–Asp-339, and Gly-419–Gly-421 each bind GTP.

This sequence belongs to the adenylosuccinate synthetase family. Homodimer. Mg(2+) serves as cofactor.

The protein localises to the cytoplasm. It carries out the reaction IMP + L-aspartate + GTP = N(6)-(1,2-dicarboxyethyl)-AMP + GDP + phosphate + 2 H(+). Its pathway is purine metabolism; AMP biosynthesis via de novo pathway; AMP from IMP: step 1/2. In terms of biological role, plays an important role in the de novo pathway and in the salvage pathway of purine nucleotide biosynthesis. Catalyzes the first committed step in the biosynthesis of AMP from IMP. This Saccharomyces cerevisiae (strain JAY291) (Baker's yeast) protein is Adenylosuccinate synthetase.